The sequence spans 1079 residues: Translation initiation factor IF-2 (1079 aa).

Composition is skewed to basic and acidic residues over residues 52 to 65, 75 to 90, and 102 to 134; these read VQAQ…KEGN, RDGD…KAPE, and APER…KEPQ. The disordered stretch occupies residues 52-488; sequence VQAQRDGGAR…RGKKDVRPAA (437 aa). The span at 150 to 184 shows a compositional bias: low complexity; it reads APVAKVVEAAPAETPAPEAPAVKATVTAEAAPAKT. Over residues 185-194 the composition is skewed to basic and acidic residues; the sequence is VEPESERPQA. The segment covering 276-291 has biased composition (low complexity); sequence AAVAQQQMQQQAAQQQ. A compositionally biased stretch (basic and acidic residues) spans 306–327; sequence GGYRPEGQREGGYRPEGQREGG. 2 stretches are compositionally biased toward low complexity: residues 348 to 370 and 380 to 398; these read EGGY…GPRP and PGAP…APRP. Positions 419–429 are enriched in gly residues; sequence PRPGGFGGAPG. The span at 461-471 shows a compositional bias: basic and acidic residues; that stretch reads PRGRSDDDVMR. A compositionally biased stretch (basic residues) spans 473–482; sequence PRGRGKRGKK. Positions 578-745 constitute a tr-type G domain; that stretch reads TRPPVVTIMG…LIAIQAEILE (168 aa). Positions 587-594 are G1; the sequence is GHVDHGKT. 587–594 contributes to the GTP binding site; that stretch reads GHVDHGKT. The G2 stretch occupies residues 612 to 616; it reads GITQH. Positions 633–636 are G3; that stretch reads DTPG. GTP contacts are provided by residues 633 to 637 and 687 to 690; these read DTPGH and NKMD. A G4 region spans residues 687 to 690; sequence NKMD. A G5 region spans residues 723–725; the sequence is SAK.

This sequence belongs to the TRAFAC class translation factor GTPase superfamily. Classic translation factor GTPase family. IF-2 subfamily.

It localises to the cytoplasm. One of the essential components for the initiation of protein synthesis. Protects formylmethionyl-tRNA from spontaneous hydrolysis and promotes its binding to the 30S ribosomal subunits. Also involved in the hydrolysis of GTP during the formation of the 70S ribosomal complex. This is Translation initiation factor IF-2 from Nitratidesulfovibrio vulgaris (strain DP4) (Desulfovibrio vulgaris).